The chain runs to 221 residues: Ribonuclease T (221 aa).

An Exonuclease domain is found at 20–194; sequence VVIDVETAGF…YDTERTAELF (175 aa). Residues Asp-23, Glu-25, His-181, and Asp-186 each coordinate Mg(2+). His-181 functions as the Proton donor/acceptor in the catalytic mechanism.

Belongs to the RNase T family. Homodimer. The cofactor is Mg(2+).

In terms of biological role, trims short 3' overhangs of a variety of RNA species, leaving a one or two nucleotide 3' overhang. Responsible for the end-turnover of tRNA: specifically removes the terminal AMP residue from uncharged tRNA (tRNA-C-C-A). Also appears to be involved in tRNA biosynthesis. In Shewanella frigidimarina (strain NCIMB 400), this protein is Ribonuclease T.